The chain runs to 521 residues: AAA ATPase forming ring-shaped complexes (521 aa).

A coiled-coil region spans residues 4–44 (TEDLAALNDRLMAKNHALAEALNRAGKELTKAKSRLAQLAQ). 235-240 (GNGKTM) serves as a coordination point for ATP.

Belongs to the AAA ATPase family. In terms of assembly, homohexamer. Assembles into a hexameric ring structure.

The sequence is that of AAA ATPase forming ring-shaped complexes from Bifidobacterium longum subsp. infantis (strain ATCC 15697 / DSM 20088 / JCM 1222 / NCTC 11817 / S12).